A 984-amino-acid chain; its full sequence is Mineralocorticoid receptor (984 aa).

Residues 1-602 are modulating; sequence METKGYHSLP…STGSSRPSKI (602 aa). The span at 231–243 shows a compositional bias: polar residues; sequence QGTPLTCSPNVEN. Disordered stretches follow at residues 231-329 and 346-369; these read QGTP…AAST and SGTS…EKGA. Ser-250, Ser-259, Ser-283, Ser-287, and Ser-299 each carry phosphoserine. Residues 259–291 are compositionally biased toward low complexity; that stretch reads SPLSSPLSSMKSSISSPPSHCSVKSPVSSPNNV. Polar residues predominate over residues 292-329; sequence TLRSSVSSPANINNSRCSVSSPSNTNNRSTLSSPAAST. Residues 346 to 355 show a composition bias toward low complexity; sequence SGTSAGSSTS. Zn(2+) is bound by residues Cys-603, Cys-606, Cys-620, Cys-623, Cys-639, Cys-645, Cys-655, and Cys-658. NR C4-type zinc fingers lie at residues 603-623 and 639-663; these read CLVC…CGSC and CAGR…LQKC. Positions 603–668 form a DNA-binding region, nuclear receptor; that stretch reads CLVCGDEASG…RLQKCLQAGM (66 aa). The hinge stretch occupies residues 669 to 725; the sequence is NLGARKSKKLGKLKGIHEEQPQQQQPPPPPPPPQSPEEGTTYIAPAKEPSVNTALVP. The tract at residues 684-710 is disordered; the sequence is IHEEQPQQQQPPPPPPPPQSPEEGTTY. The span at 692-703 shows a compositional bias: pro residues; the sequence is QQPPPPPPPPQS. Positions 726–964 constitute an NR LBD domain; the sequence is QLSTISRALT…EFPAMLVEII (239 aa). Residues Asn-770 and Gln-776 each contribute to the 21-hydroxyprogesterone site. Aldosterone is bound by residues Asn-770 and Gln-776. 2 residues coordinate progesterone: Asn-770 and Gln-776. The important for coactivator binding stretch occupies residues 782-785; it reads KWAK. The 21-hydroxyprogesterone site is built by Arg-817 and Thr-945. Arg-817 and Thr-945 together coordinate aldosterone. Positions 817 and 945 each coordinate progesterone.

Belongs to the nuclear hormone receptor family. NR3 subfamily. In terms of assembly, heteromultimeric cytoplasmic complex with HSP90, HSP70, and FKBP4, in the absence of ligand. After ligand binding, it translocates to the nucleus and binds to DNA as a homodimer and as a heterodimer with NR3C1. Binds the coactivator NCOA2. May interact with HSD11B2 in the absence of ligand. Binds the coactivators NCOA1, TIF1 and NRIP1. Phosphorylated.

It is found in the cytoplasm. Its subcellular location is the nucleus. The protein resides in the endoplasmic reticulum membrane. Functionally, receptor for both mineralocorticoids (MC) such as aldosterone and glucocorticoids (GC) such as corticosterone or cortisol. Binds to mineralocorticoid response elements (MRE) and transactivates target genes. The effect of MC is to increase ion and water transport and thus raise extracellular fluid volume and blood pressure and lower potassium levels. This is Mineralocorticoid receptor (NR3C2) from Aotus nancymaae (Ma's night monkey).